Consider the following 211-residue polypeptide: Phosphatidylglycerophosphatase C (211 aa).

The Cytoplasmic segment spans residues 1 to 33; the sequence is MATHERRVVFFDLDGTLHQQDMFGSFLRYLLRR. The chain crosses the membrane as a helical span at residues 34–54; the sequence is QPLNALLVLPLLPIIAIALLI. At 55–211 the chain is on the periplasmic side; it reads KGRAARWPMS…TPRGELQQLE (157 aa).

The cofactor is Mg(2+).

The protein localises to the cell inner membrane. It carries out the reaction a 1,2-diacyl-sn-glycero-3-phospho-(1'-sn-glycero-3'-phosphate) + H2O = a 1,2-diacyl-sn-glycero-3-phospho-(1'-sn-glycerol) + phosphate. It participates in phospholipid metabolism; phosphatidylglycerol biosynthesis; phosphatidylglycerol from CDP-diacylglycerol: step 2/2. Functionally, lipid phosphatase which dephosphorylates phosphatidylglycerophosphate (PGP) to phosphatidylglycerol (PG). In Escherichia coli (strain K12), this protein is Phosphatidylglycerophosphatase C (pgpC).